A 577-amino-acid chain; its full sequence is PTS system lactose-specific EIICB component (577 aa).

Residues 4-405 (VFDKLKPVFE…VLDVAIYFPF (402 aa)) enclose the PTS EIIC type-3 domain. 9 helical membrane passes run 27–47 (GFIA…VAYV), 63–83 (LMVA…GTTA), 100–120 (INPV…SILP), 133–153 (QGLI…YVCI), 176–196 (LIPM…FKAA), 219–239 (YLGL…GVQG), 280–300 (VMNF…LFAA), 326–346 (FGMP…TPIV), and 386–406 (LAFV…FPFI). Residues 476-577 (EVDVLVLCAG…MALDFVESNL (102 aa)) enclose the PTS EIIB type-3 domain. Catalysis depends on Cys-483, which acts as the Phosphocysteine intermediate; for EIIB activity. Position 483 is a phosphocysteine; by EIIA (Cys-483).

It is found in the cell membrane. The enzyme catalyses lactose(out) + N(pros)-phospho-L-histidyl-[protein] = lactose 6-phosphate(in) + L-histidyl-[protein]. Its function is as follows. The phosphoenolpyruvate-dependent sugar phosphotransferase system (sugar PTS), a major carbohydrate active transport system, catalyzes the phosphorylation of incoming sugar substrates concomitantly with their translocation across the cell membrane. The enzyme II LacEF PTS system is involved in lactose transport. This chain is PTS system lactose-specific EIICB component, found in Lacticaseibacillus casei (Lactobacillus casei).